A 55-amino-acid polypeptide reads, in one-letter code: MKKWQCVVCGLIYDEAKGWPEEGIEAGTRWEDVPEDWLCPDCGVGKLDFEMIEIG.

The 54-residue stretch at 1–54 (MKKWQCVVCGLIYDEAKGWPEEGIEAGTRWEDVPEDWLCPDCGVGKLDFEMIEI) folds into the Rubredoxin-like domain. Residues C6, C9, C39, and C42 each coordinate Fe cation.

The protein belongs to the rubredoxin family. It depends on Fe(3+) as a cofactor.

The protein localises to the cytoplasm. It participates in hydrocarbon metabolism; alkane degradation. Functionally, involved in the hydrocarbon hydroxylating system, which transfers electrons from NADH to rubredoxin reductase and then through rubredoxin to alkane 1 monooxygenase. The protein is Rubredoxin-1 (rubA1) of Pseudomonas aeruginosa (strain ATCC 15692 / DSM 22644 / CIP 104116 / JCM 14847 / LMG 12228 / 1C / PRS 101 / PAO1).